The chain runs to 188 residues: Cell division protein SepF (188 aa).

The segment at 29–53 (EQQDQDQRATQADGGALATLGDSNP) is disordered.

It belongs to the SepF family. In terms of assembly, homodimer. Interacts with FtsZ.

It localises to the cytoplasm. Functionally, cell division protein that is part of the divisome complex and is recruited early to the Z-ring. Probably stimulates Z-ring formation, perhaps through the cross-linking of FtsZ protofilaments. Its function overlaps with FtsA. This chain is Cell division protein SepF, found in Synechococcus sp. (strain CC9902).